A 215-amino-acid polypeptide reads, in one-letter code: Pyrrolidone-carboxylate peptidase (215 aa).

Catalysis depends on residues Glu-80, Cys-143, and His-167.

It belongs to the peptidase C15 family. In terms of assembly, homotetramer.

The protein localises to the cytoplasm. The enzyme catalyses Release of an N-terminal pyroglutamyl group from a polypeptide, the second amino acid generally not being Pro.. Functionally, removes 5-oxoproline from various penultimate amino acid residues except L-proline. The sequence is that of Pyrrolidone-carboxylate peptidase from Bacillus thuringiensis (strain Al Hakam).